A 364-amino-acid polypeptide reads, in one-letter code: tRNA/tmRNA (uracil-C(5))-methyltransferase (364 aa).

The S-adenosyl-L-methionine site is built by Q188, Y216, N221, E237, and D297. Catalysis depends on C322, which acts as the Nucleophile. E356 functions as the Proton acceptor in the catalytic mechanism.

The protein belongs to the class I-like SAM-binding methyltransferase superfamily. RNA M5U methyltransferase family. TrmA subfamily.

It carries out the reaction uridine(54) in tRNA + S-adenosyl-L-methionine = 5-methyluridine(54) in tRNA + S-adenosyl-L-homocysteine + H(+). The enzyme catalyses uridine(341) in tmRNA + S-adenosyl-L-methionine = 5-methyluridine(341) in tmRNA + S-adenosyl-L-homocysteine + H(+). In terms of biological role, dual-specificity methyltransferase that catalyzes the formation of 5-methyluridine at position 54 (m5U54) in all tRNAs, and that of position 341 (m5U341) in tmRNA (transfer-mRNA). The sequence is that of tRNA/tmRNA (uracil-C(5))-methyltransferase from Colwellia psychrerythraea (strain 34H / ATCC BAA-681) (Vibrio psychroerythus).